A 421-amino-acid chain; its full sequence is Serine--tRNA ligase (421 aa).

230 to 232 (TAE) contributes to the L-serine binding site. Position 259 to 261 (259 to 261 (RRE)) interacts with ATP. E282 lines the L-serine pocket. Position 346–349 (346–349 (EISS)) interacts with ATP. S381 lines the L-serine pocket.

Belongs to the class-II aminoacyl-tRNA synthetase family. Type-1 seryl-tRNA synthetase subfamily. As to quaternary structure, homodimer. The tRNA molecule binds across the dimer.

The protein localises to the cytoplasm. It catalyses the reaction tRNA(Ser) + L-serine + ATP = L-seryl-tRNA(Ser) + AMP + diphosphate + H(+). The catalysed reaction is tRNA(Sec) + L-serine + ATP = L-seryl-tRNA(Sec) + AMP + diphosphate + H(+). It functions in the pathway aminoacyl-tRNA biosynthesis; selenocysteinyl-tRNA(Sec) biosynthesis; L-seryl-tRNA(Sec) from L-serine and tRNA(Sec): step 1/1. Catalyzes the attachment of serine to tRNA(Ser). Is also able to aminoacylate tRNA(Sec) with serine, to form the misacylated tRNA L-seryl-tRNA(Sec), which will be further converted into selenocysteinyl-tRNA(Sec). In Acidithiobacillus ferrooxidans (strain ATCC 23270 / DSM 14882 / CIP 104768 / NCIMB 8455) (Ferrobacillus ferrooxidans (strain ATCC 23270)), this protein is Serine--tRNA ligase.